The sequence spans 600 residues: Arginine--tRNA ligase (600 aa).

Positions proline 123–histidine 133 match the 'HIGH' region motif.

The protein belongs to the class-I aminoacyl-tRNA synthetase family. In terms of assembly, monomer.

The protein resides in the cytoplasm. It catalyses the reaction tRNA(Arg) + L-arginine + ATP = L-arginyl-tRNA(Arg) + AMP + diphosphate. This chain is Arginine--tRNA ligase, found in Caulobacter vibrioides (strain NA1000 / CB15N) (Caulobacter crescentus).